Here is a 369-residue protein sequence, read N- to C-terminus: Ribonuclease D (369 aa).

A 3'-5' exonuclease domain is found at 1–166 (MITTNDALAA…PIAHKLMEQV (166 aa)). In terms of domain architecture, HRDC spans 206-285 (RPRQLACLKL…AQAQALLEDA (80 aa)).

The protein belongs to the RNase D family. A divalent metal cation is required as a cofactor.

Its subcellular location is the cytoplasm. The catalysed reaction is Exonucleolytic cleavage that removes extra residues from the 3'-terminus of tRNA to produce 5'-mononucleotides.. In terms of biological role, exonuclease involved in the 3' processing of various precursor tRNAs. Initiates hydrolysis at the 3'-terminus of an RNA molecule and releases 5'-mononucleotides. The sequence is that of Ribonuclease D from Cronobacter turicensis (strain DSM 18703 / CCUG 55852 / LMG 23827 / z3032).